The primary structure comprises 306 residues: Pantothenate kinase (306 aa).

An ATP-binding site is contributed by 91–98 (GSVAVGKS).

This sequence belongs to the prokaryotic pantothenate kinase family.

The protein localises to the cytoplasm. The enzyme catalyses (R)-pantothenate + ATP = (R)-4'-phosphopantothenate + ADP + H(+). It participates in cofactor biosynthesis; coenzyme A biosynthesis; CoA from (R)-pantothenate: step 1/5. In Streptococcus pyogenes serotype M12 (strain MGAS2096), this protein is Pantothenate kinase.